We begin with the raw amino-acid sequence, 165 residues long: Protein SprT (165 aa).

The SprT-like domain maps to 10-158; sequence EACYRQAEHF…CRRCKATLVF (149 aa). His69 contributes to the Zn(2+) binding site. Glu70 is an active-site residue. Position 73 (His73) interacts with Zn(2+).

Belongs to the SprT family. Zn(2+) serves as cofactor.

The protein localises to the cytoplasm. This chain is Protein SprT, found in Pseudomonas aeruginosa (strain UCBPP-PA14).